The sequence spans 95 residues: Co-chaperonin GroES (95 aa).

This sequence belongs to the GroES chaperonin family. In terms of assembly, heptamer of 7 subunits arranged in a ring. Interacts with the chaperonin GroEL.

It localises to the cytoplasm. In terms of biological role, together with the chaperonin GroEL, plays an essential role in assisting protein folding. The GroEL-GroES system forms a nano-cage that allows encapsulation of the non-native substrate proteins and provides a physical environment optimized to promote and accelerate protein folding. GroES binds to the apical surface of the GroEL ring, thereby capping the opening of the GroEL channel. The chain is Co-chaperonin GroES from Rhizorhabdus wittichii (strain DSM 6014 / CCUG 31198 / JCM 15750 / NBRC 105917 / EY 4224 / RW1) (Sphingomonas wittichii).